We begin with the raw amino-acid sequence, 226 residues long: Ras-related protein RGP1 (226 aa).

Residue G25–S32 coordinates GTP. The Effector region motif lies at S47–F55. GTP contacts are provided by residues D73–Q77 and N131–D134. 2 S-geranylgeranyl cysteine lipidation sites follow: C223 and C224.

It belongs to the small GTPase superfamily. Rab family.

It localises to the cell membrane. Its function is as follows. May play an important role in plant growth and development. This is Ras-related protein RGP1 (RGP1) from Oryza sativa subsp. japonica (Rice).